A 766-amino-acid chain; its full sequence is Phosphoribosylformylglycinamidine synthase subunit PurL (766 aa).

The active site involves His-66. Residues Tyr-69 and Lys-113 each contribute to the ATP site. Glu-115 is a binding site for Mg(2+). Substrate is bound by residues 116–119 (SHNH) and Arg-138. Catalysis depends on His-117, which acts as the Proton acceptor. Asp-139 provides a ligand contact to Mg(2+). A substrate-binding site is contributed by Gln-264. Residue Asp-292 participates in Mg(2+) binding. 336-338 (ESQ) provides a ligand contact to substrate. Residues Asn-524 and Gly-561 each contribute to the ATP site. Asn-562 serves as a coordination point for Mg(2+). Ser-564 is a binding site for substrate.

This sequence belongs to the FGAMS family. As to quaternary structure, monomer. Part of the FGAM synthase complex composed of 1 PurL, 1 PurQ and 2 PurS subunits.

Its subcellular location is the cytoplasm. It carries out the reaction N(2)-formyl-N(1)-(5-phospho-beta-D-ribosyl)glycinamide + L-glutamine + ATP + H2O = 2-formamido-N(1)-(5-O-phospho-beta-D-ribosyl)acetamidine + L-glutamate + ADP + phosphate + H(+). It participates in purine metabolism; IMP biosynthesis via de novo pathway; 5-amino-1-(5-phospho-D-ribosyl)imidazole from N(2)-formyl-N(1)-(5-phospho-D-ribosyl)glycinamide: step 1/2. Part of the phosphoribosylformylglycinamidine synthase complex involved in the purines biosynthetic pathway. Catalyzes the ATP-dependent conversion of formylglycinamide ribonucleotide (FGAR) and glutamine to yield formylglycinamidine ribonucleotide (FGAM) and glutamate. The FGAM synthase complex is composed of three subunits. PurQ produces an ammonia molecule by converting glutamine to glutamate. PurL transfers the ammonia molecule to FGAR to form FGAM in an ATP-dependent manner. PurS interacts with PurQ and PurL and is thought to assist in the transfer of the ammonia molecule from PurQ to PurL. This Mycobacterium tuberculosis (strain CDC 1551 / Oshkosh) protein is Phosphoribosylformylglycinamidine synthase subunit PurL.